We begin with the raw amino-acid sequence, 192 residues long: NADH-quinone oxidoreductase subunit B 1 (192 aa).

Positions 71, 72, 136, and 166 each coordinate [4Fe-4S] cluster.

This sequence belongs to the complex I 20 kDa subunit family. In terms of assembly, NDH-1 is composed of 14 different subunits. Subunits NuoB, C, D, E, F, and G constitute the peripheral sector of the complex. [4Fe-4S] cluster serves as cofactor.

It is found in the cell inner membrane. The enzyme catalyses a quinone + NADH + 5 H(+)(in) = a quinol + NAD(+) + 4 H(+)(out). In terms of biological role, NDH-1 shuttles electrons from NADH, via FMN and iron-sulfur (Fe-S) centers, to quinones in the respiratory chain. The immediate electron acceptor for the enzyme in this species is believed to be ubiquinone. Couples the redox reaction to proton translocation (for every two electrons transferred, four hydrogen ions are translocated across the cytoplasmic membrane), and thus conserves the redox energy in a proton gradient. The polypeptide is NADH-quinone oxidoreductase subunit B 1 (Rhizobium meliloti (strain 1021) (Ensifer meliloti)).